The chain runs to 858 residues: Toll-like receptor 5 (858 aa).

The N-terminal stretch at Met-1–Gly-20 is a signal peptide. The Extracellular portion of the chain corresponds to Ile-21–Lys-639. Residues Asn-37 and Asn-46 are each glycosylated (N-linked (GlcNAc...) asparagine). LRR repeat units lie at residues Leu-45–Phe-68, Gln-71–Asn-93, Pro-95–Gly-117, His-120–Asn-143, Ala-146–Phe-166, Ser-171–Pro-192, Thr-197–Arg-211, Val-214–Glu-229, and Ser-234–Gly-235. A glycan (N-linked (GlcNAc...) asparagine) is linked at Asn-245. LRR repeat units lie at residues Leu-260–Gly-284, Ser-289–Phe-301, Asp-313–Gly-334, Asn-337–Asn-355, Lys-385–Phe-401, Gly-412–Ser-431, His-449–Ser-470, Ser-474–Trp-495, His-503–His-524, Ala-527–Leu-546, and Asn-549–Val-567. Residue Asn-342 is glycosylated (N-linked (GlcNAc...) asparagine). N-linked (GlcNAc...) asparagine glycosylation occurs at Asn-422. In terms of domain architecture, LRRCT spans Asn-579–Glu-631. 2 disulfide bridges follow: Cys-583-Cys-610 and Cys-585-Cys-629. Asn-595 and Asn-598 each carry an N-linked (GlcNAc...) asparagine glycan. Residues Phe-640 to Val-660 form a helical membrane-spanning segment. The Cytoplasmic segment spans residues Thr-661–Ser-858. A TIR domain is found at Tyr-691–Ile-836. Tyr-798 bears the Phosphotyrosine mark. The residue at position 805 (Ser-805) is a Phosphoserine; by PKD/PRKD1.

The protein belongs to the Toll-like receptor family. Homodimer. Interacts with MYD88 (via TIR domain). Interacts with TICAM1 (via TIR domain). Interacts with UNC93B1; this interaction is essential for proper TLR5 localization to the plasma membrane. Post-translationally, phosphorylated at Ser-805 by PKD/PRKD1; phosphorylation induces the production of inflammatory cytokines. In terms of processing, phosphorylated at Tyr-798 upon flagellin binding; required for signaling. Highly expressed on the basolateral surface of intestinal epithelia. Expressed also in other cells such as lung epithelial cells.

The protein resides in the cell membrane. In terms of biological role, pattern recognition receptor (PRR) located on the cell surface that participates in the activation of innate immunity and inflammatory response. Recognizes small molecular motifs named pathogen-associated molecular pattern (PAMPs) expressed by pathogens and microbe-associated molecular patterns (MAMPs) usually expressed by resident microbiota. Upon ligand binding such as bacterial flagellins, recruits intracellular adapter proteins MYD88 and TRIF leading to NF-kappa-B activation, cytokine secretion and induction of the inflammatory response. Plays thereby an important role in the relationship between the intestinal epithelium and enteric microbes and contributes to the gut microbiota composition throughout life. This chain is Toll-like receptor 5 (TLR5), found in Homo sapiens (Human).